Here is a 155-residue protein sequence, read N- to C-terminus: Ribosomal RNA large subunit methyltransferase H (155 aa).

S-adenosyl-L-methionine contacts are provided by residues L73, G104, and I123–F128.

This sequence belongs to the RNA methyltransferase RlmH family. As to quaternary structure, homodimer.

The protein resides in the cytoplasm. It catalyses the reaction pseudouridine(1915) in 23S rRNA + S-adenosyl-L-methionine = N(3)-methylpseudouridine(1915) in 23S rRNA + S-adenosyl-L-homocysteine + H(+). Functionally, specifically methylates the pseudouridine at position 1915 (m3Psi1915) in 23S rRNA. The polypeptide is Ribosomal RNA large subunit methyltransferase H (Francisella philomiragia subsp. philomiragia (strain ATCC 25017 / CCUG 19701 / FSC 153 / O#319-036)).